The primary structure comprises 568 residues: WW domain-containing protein A (568 aa).

One can recognise a C2 domain in the interval 6 to 129; that stretch reads PLNNSNGSNS…TGPISHDVVF (124 aa). In terms of domain architecture, WW 1 spans 325 to 359; the sequence is VKLPDGWESRIDPVSGKVFYLNHNNKTTSWISPLE. A disordered region spans residues 376-461; it reads TILDNNNNNN…SRPKKTPATP (86 aa). Residues 380–418 show a composition bias toward low complexity; that stretch reads NNNNNNNNNNNNNNNNNNNNNNINNTNNIQQKQQAQQQP. Basic and acidic residues predominate over residues 435–451; it reads QKEKEKEKEINAEDYKI. Residues 519–552 form the WW 2 domain; the sequence is QGLPNGWEVRQDQFGRVFYVDHINRATTWTRPTV.

Interacts with calmodulin in the absence of Ca(2+).

Its subcellular location is the nucleus. It is found in the nucleolus. The protein localises to the cytoplasm. It localises to the cell cortex. The protein resides in the cytoskeleton. In terms of biological role, involved in regulation of actin cytoskeleton organization and cytokinesis. The polypeptide is WW domain-containing protein A (Dictyostelium discoideum (Social amoeba)).